We begin with the raw amino-acid sequence, 75 residues long: U-stichotoxin-Hau3a (75 aa).

Positions 1–19 are cleaved as a signal peptide; the sequence is MNHLIILVVAAVFLGMASA. Residues 20-26 constitute a propeptide that is removed on maturation; that stretch reads EDVFHKR. 3 cysteine pairs are disulfide-bonded: Cys31/Cys71, Cys33/Cys61, and Cys54/Cys72.

The protein belongs to the sea anemone sodium channel inhibitory toxin family. Type I subfamily. Contains 3 disulfide bonds.

It is found in the secreted. Its subcellular location is the nematocyst. Toxin that is lethal to crab. In Heteractis aurora (Banded sea anemone), this protein is U-stichotoxin-Hau3a.